Consider the following 412-residue polypeptide: MAFQCQRDCYMQEFDSCVVSCVPAELKLENNGRKEKLTGFNVKLKDTILFPEGGGQPDDHGTIGGVPVLRVLRQGPDAVHFVSSALEEGQEVHIKLDWERRFDHMQQHSGQHLITALADTMFGYKTTSWDLGRQRSSIELDTATVKPGEMEALETAVNEKIRAHVPVTVNLLSIDDPAVEKVRSRGLPDDHAGPIRIIDIEGVDANMCCGTHVSNLSHLQVIKILGTEKGKKNKTNLIFIAGNRVLKYAEKSYNIEKSLTVLLKTGADEHVDAVDKLQKTVKRLQKSNLTILREMAVLIAQNFKSKPDRGHFFSLHNKDGDNEFMNIVANEIGFQDTLIFMTVGDEKGAGLFLIAGPENIVTEVGPRVSELLQGKGAGKAGRYQGKANSLVKRAEVEALLKERSYKCTAGDE.

4 residues coordinate Zn(2+): histidine 108, histidine 112, cysteine 208, and histidine 212.

This sequence belongs to the class-II aminoacyl-tRNA synthetase family. Alax-L subfamily. Zn(2+) is required as a cofactor.

The protein resides in the cytoplasm. Its function is as follows. Functions in trans to edit the amino acid moiety from incorrectly charged tRNA(Ala). In Danio rerio (Zebrafish), this protein is Alanyl-tRNA editing protein Aarsd1 (aarsd1).